Here is a 155-residue protein sequence, read N- to C-terminus: Small ribosomal subunit protein uS10m (155 aa).

This sequence belongs to the universal ribosomal protein uS10 family. As to quaternary structure, component of the mitochondrial ribosome small subunit (28S) which comprises a 12S rRNA and about 30 distinct proteins.

The protein resides in the mitochondrion. This chain is Small ribosomal subunit protein uS10m (Mrps10), found in Rattus norvegicus (Rat).